Reading from the N-terminus, the 323-residue chain is Beta-ketoacyl-[acyl-carrier-protein] synthase III (323 aa).

Catalysis depends on residues Cys113 and His250. Positions 251 to 255 (QANKR) are ACP-binding. Asn280 is a catalytic residue.

This sequence belongs to the thiolase-like superfamily. FabH family. As to quaternary structure, homodimer.

It is found in the cytoplasm. It catalyses the reaction malonyl-[ACP] + acetyl-CoA + H(+) = 3-oxobutanoyl-[ACP] + CO2 + CoA. Its pathway is lipid metabolism; fatty acid biosynthesis. Its function is as follows. Catalyzes the condensation reaction of fatty acid synthesis by the addition to an acyl acceptor of two carbons from malonyl-ACP. Catalyzes the first condensation reaction which initiates fatty acid synthesis and may therefore play a role in governing the total rate of fatty acid production. Possesses both acetoacetyl-ACP synthase and acetyl transacylase activities. Its substrate specificity determines the biosynthesis of branched-chain and/or straight-chain of fatty acids. The sequence is that of Beta-ketoacyl-[acyl-carrier-protein] synthase III from Agrobacterium fabrum (strain C58 / ATCC 33970) (Agrobacterium tumefaciens (strain C58)).